A 208-amino-acid chain; its full sequence is ATP synthase subunit b 1 (208 aa).

Over residues 1–18 (MFVSTAFAQTATESQPAS) the composition is skewed to polar residues. The disordered stretch occupies residues 1 to 26 (MFVSTAFAQTATESQPASTAGEHGAA). Residues 56–78 (SQVLWLAITFGLFYLFLSRVVLP) traverse the membrane as a helical segment.

The protein belongs to the ATPase B chain family. In terms of assembly, F-type ATPases have 2 components, F(1) - the catalytic core - and F(0) - the membrane proton channel. F(1) has five subunits: alpha(3), beta(3), gamma(1), delta(1), epsilon(1). F(0) has three main subunits: a(1), b(2) and c(10-14). The alpha and beta chains form an alternating ring which encloses part of the gamma chain. F(1) is attached to F(0) by a central stalk formed by the gamma and epsilon chains, while a peripheral stalk is formed by the delta and b chains.

It localises to the cell inner membrane. Functionally, f(1)F(0) ATP synthase produces ATP from ADP in the presence of a proton or sodium gradient. F-type ATPases consist of two structural domains, F(1) containing the extramembraneous catalytic core and F(0) containing the membrane proton channel, linked together by a central stalk and a peripheral stalk. During catalysis, ATP synthesis in the catalytic domain of F(1) is coupled via a rotary mechanism of the central stalk subunits to proton translocation. In terms of biological role, component of the F(0) channel, it forms part of the peripheral stalk, linking F(1) to F(0). This Brucella abortus (strain 2308) protein is ATP synthase subunit b 1.